A 148-amino-acid polypeptide reads, in one-letter code: 3-dehydroquinate dehydratase (148 aa).

Tyr-23 serves as the catalytic Proton acceptor. Positions 74, 80, and 87 each coordinate substrate. His-100 serves as the catalytic Proton donor. Substrate-binding positions include 101–102 and Arg-111; that span reads IS.

Belongs to the type-II 3-dehydroquinase family. Homododecamer.

The catalysed reaction is 3-dehydroquinate = 3-dehydroshikimate + H2O. The protein operates within metabolic intermediate biosynthesis; chorismate biosynthesis; chorismate from D-erythrose 4-phosphate and phosphoenolpyruvate: step 3/7. Catalyzes a trans-dehydration via an enolate intermediate. The sequence is that of 3-dehydroquinate dehydratase from Caldanaerobacter subterraneus subsp. tengcongensis (strain DSM 15242 / JCM 11007 / NBRC 100824 / MB4) (Thermoanaerobacter tengcongensis).